Consider the following 93-residue polypeptide: MIMDLQFFSHHKGGGSTANGRNSAGRRLGTKAADGSVVTAGSILYRQRGTHINPGENVGRGNDDTLFALVDGVVKFERLGRDKRKVSVYPVAE.

Residues 1-8 (MIMDLQFF) constitute a propeptide that is removed on maturation. The segment at 8–29 (FSHHKGGGSTANGRNSAGRRLG) is disordered.

This sequence belongs to the bacterial ribosomal protein bL27 family. In terms of processing, the N-terminus is cleaved by ribosomal processing cysteine protease Prp.

The sequence is that of Large ribosomal subunit protein bL27 from Limosilactobacillus fermentum (strain NBRC 3956 / LMG 18251) (Lactobacillus fermentum).